Consider the following 172-residue polypeptide: Nicotinamide-nucleotide adenylyltransferase (172 aa).

This sequence belongs to the archaeal NMN adenylyltransferase family.

It localises to the cytoplasm. It catalyses the reaction beta-nicotinamide D-ribonucleotide + ATP + H(+) = diphosphate + NAD(+). It functions in the pathway cofactor biosynthesis; NAD(+) biosynthesis; NAD(+) from nicotinamide D-ribonucleotide: step 1/1. The chain is Nicotinamide-nucleotide adenylyltransferase from Methanococcus aeolicus (strain ATCC BAA-1280 / DSM 17508 / OCM 812 / Nankai-3).